A 270-amino-acid chain; its full sequence is Formamidopyrimidine-DNA glycosylase (270 aa).

Pro-2 serves as the catalytic Schiff-base intermediate with DNA. The active-site Proton donor is Glu-3. The Proton donor; for beta-elimination activity role is filled by Lys-58. The DNA site is built by His-91, Arg-110, and Arg-151. The FPG-type zinc-finger motif lies at 236–270 (FVYGRGGENCKVCGTGLREIKLGQRASVYCPRCQS). Arg-260 functions as the Proton donor; for delta-elimination activity in the catalytic mechanism.

The protein belongs to the FPG family. As to quaternary structure, monomer. Zn(2+) is required as a cofactor.

It catalyses the reaction Hydrolysis of DNA containing ring-opened 7-methylguanine residues, releasing 2,6-diamino-4-hydroxy-5-(N-methyl)formamidopyrimidine.. The enzyme catalyses 2'-deoxyribonucleotide-(2'-deoxyribose 5'-phosphate)-2'-deoxyribonucleotide-DNA = a 3'-end 2'-deoxyribonucleotide-(2,3-dehydro-2,3-deoxyribose 5'-phosphate)-DNA + a 5'-end 5'-phospho-2'-deoxyribonucleoside-DNA + H(+). In terms of biological role, involved in base excision repair of DNA damaged by oxidation or by mutagenic agents. Acts as a DNA glycosylase that recognizes and removes damaged bases. Has a preference for oxidized purines, such as 7,8-dihydro-8-oxoguanine (8-oxoG). Has AP (apurinic/apyrimidinic) lyase activity and introduces nicks in the DNA strand. Cleaves the DNA backbone by beta-delta elimination to generate a single-strand break at the site of the removed base with both 3'- and 5'-phosphates. This is Formamidopyrimidine-DNA glycosylase from Pseudomonas fluorescens (strain ATCC BAA-477 / NRRL B-23932 / Pf-5).